An 886-amino-acid polypeptide reads, in one-letter code: Leucine--tRNA ligase (886 aa).

The 'HIGH' region motif lies at 46–56 (PYPSGKLHMGH). Residues 638–642 (TMSKS) carry the 'KMSKS' region motif. An ATP-binding site is contributed by lysine 641.

This sequence belongs to the class-I aminoacyl-tRNA synthetase family.

Its subcellular location is the cytoplasm. It carries out the reaction tRNA(Leu) + L-leucine + ATP = L-leucyl-tRNA(Leu) + AMP + diphosphate. In Polaromonas sp. (strain JS666 / ATCC BAA-500), this protein is Leucine--tRNA ligase.